The chain runs to 722 residues: MEKNGNNRKLRVCVATCNRADYSKLAPIMFGIKTEPEFFELDVVVLGSHLIDDYGNTYRMIEQDDFDINTRLHTIVRGEDEAAMVESVGLALVKLPDVLNRLKPDIMIVHGDRFDALALATSAALMNIRILHIEGGEVSGTIDDSIRHAITKLAHYHVCCTRSAEQHLISMCEDHDRILLAGCPSYDKLLSAKNKDYMSIIRMWLGDDVKSKDYIVALQHPVTTDIKHSIKMFELTLDALISFNKRTLVLFPNIDAGSKEMVRVMRKKGIEHHPNFRAVKHVPFDQFIQLVAHAGCMIGNSSCGVREVGAFGTPVINLGTRQIGRETGENVLHVRDADTQDKILQALHLQFGKQYPCSKIYGDGNAVPRILKFLKSIDLQEPLQKKFCFPPVKENISQDIDHILETLSALAVDLGGTNLRVAIVSMKGEIVKKYTQFNPKTYEERINLILQMCVEAAAEAVKLNCRILGVGISTGGRVNPREGIVLHSTKLIQEWNSVDLRTPLSDTLHLPVWVDNDGNCAALAERKFGQGKGLENFVTLITGTGIGGGIIHQHELIHGSSFCAAELGHLVVSLDGPDCSCGSHGCIEAYASGMALQREAKKLHDEDLLLVEGMSVPKDEAVGALHLIQAAKLGNAKAQSILRTAGTALGLGVVNILHTMNPSLVILSGVLASHYIHIVKDVIRQQALSSVQDVDVVVSDLVDPALLGAASMVLDYTTRRIY.

UDP-binding residues include Arg19, Ser23, Arg113, His220, and Asn253. The CMP-N-acetyl-beta-neuraminate site is built by Lys259, Glu271, Lys280, and His281. 5 residues coordinate UDP: Val282, Ser301, Ser302, Glu307, and Arg321. Residues 406 to 722 form an N-acetylmannosamine kinase region; the sequence is TLSALAVDLG…VLDYTTRRIY (317 aa). Asp413 contacts Mg(2+). Position 416 (Gly416) interacts with an N-acyl-D-mannosamine 6-phosphate. ADP is bound by residues Thr417, Asn418, and Arg420. The an N-acyl-D-mannosamine 6-phosphate site is built by Gly476, Arg477, Thr489, Asn516, Asp517, and Gly545. An N-acyl-D-mannosamine contacts are provided by Gly476, Arg477, Thr489, Asn516, and Asp517. Residue Asp517 is part of the active site. An N-acyl-D-mannosamine contacts are provided by Glu566 and His569. Residue His569 participates in an N-acyl-D-mannosamine 6-phosphate binding. Zn(2+) is bound by residues His569, Cys579, Cys581, and Cys586. An an N-acyl-D-mannosamine 6-phosphate-binding site is contributed by Glu588. Glu588 lines the an N-acyl-D-mannosamine pocket.

The protein in the N-terminal section; belongs to the UDP-N-acetylglucosamine 2-epimerase family. It in the C-terminal section; belongs to the ROK (NagC/XylR) family. As to quaternary structure, homodimer. Homotetramer. Homohexamer. The hexameric form exhibits both enzyme activities, whereas the dimeric form only catalyzes the phosphorylation of N-acyl-D-mannosamine. Phosphorylated. Phosphorylation by PKC activates the UDP-N-acetylglucosamine 2-epimerase activity. Highest expression in liver and placenta. Also found in heart, brain, lung, kidney, skeletal muscle and pancreas. Isoform 1 is expressed in heart, brain, kidney, liver, placenta, lung, spleen, pancreas, skeletal muscle and colon. Isoform 2 is expressed mainly in placenta, but also in brain, kidney, liver, lung, pancreas and colon. Isoform 3 is expressed at low level in kidney, liver, placenta and colon.

Its subcellular location is the cytoplasm. The protein resides in the cytosol. The catalysed reaction is UDP-N-acetyl-alpha-D-glucosamine + H2O = aldehydo-N-acetyl-D-mannosamine + UDP + H(+). It carries out the reaction an N-acyl-D-mannosamine + ATP = an N-acyl-D-mannosamine 6-phosphate + ADP + H(+). It participates in amino-sugar metabolism; N-acetylneuraminate biosynthesis. With respect to regulation, the UDP-N-acetylglucosamine 2-epimerase activity, in contrast to the N-acetylmannosamine kinase activity, exhibits allosteric regulation by cytidine monophosphate-N-acetylneuraminic acid (CMP-Neu5Ac), the end product of neuraminic acid biosynthesis. Moreover, the activity is contingent upon the oligomeric state of the enzyme. The monomeric form is inactive, while the dimeric form selectively catalyzes the phosphorylation of N-acetylmannosamine. The hexameric form, on the other hand, demonstrates full proficiency in both enzyme activities. Furthermore, the UDP-N-acetylglucosamine 2-epimerase activity is increased by PKC-mediated phosphorylation. In terms of biological role, bifunctional enzyme that possesses both UDP-N-acetylglucosamine 2-epimerase and N-acetylmannosamine kinase activities, and serves as the initiator of the biosynthetic pathway leading to the production of N-acetylneuraminic acid (NeuAc), a critical precursor in the synthesis of sialic acids. By catalyzing this pivotal and rate-limiting step in sialic acid biosynthesis, this enzyme assumes a pivotal role in governing the regulation of cell surface sialylation, playing a role in embryonic angiogenesis. Sialic acids represent a category of negatively charged sugars that reside on the surface of cells as terminal components of glycoconjugates and mediate important functions in various cellular processes, including cell adhesion, signal transduction, and cellular recognition. The protein is Bifunctional UDP-N-acetylglucosamine 2-epimerase/N-acetylmannosamine kinase of Homo sapiens (Human).